A 145-amino-acid polypeptide reads, in one-letter code: Neuromedin-S (145 aa).

The signal sequence occupies residues methionine 1–glycine 27. Propeptides lie at residues phenylalanine 28–tyrosine 89 and phenylalanine 92–threonine 117. At asparagine 136 the chain carries Asparagine amide. A propeptide spanning residues valine 140–histidine 145 is cleaved from the precursor.

The protein belongs to the NmU family. Expressed by the skin glands.

It localises to the secreted. Its function is as follows. Stimulates uterine smooth muscle contraction (EC(50)=1.6 nM). Synthetic peptide NmS-17 induces calcium mobilization in CHO cells transfected with either human FM-3/GPR66 (EC(50)=0.085 nM) or FM-4/TGR-1 (EC(50)=0.231 nM) NmU/NmS receptors. The chain is Neuromedin-S (nms) from Bombina maxima (Giant fire-bellied toad).